Here is a 456-residue protein sequence, read N- to C-terminus: Bifunctional protein GlmU (456 aa).

The tract at residues Met1 to Arg230 is pyrophosphorylase. UDP-N-acetyl-alpha-D-glucosamine contacts are provided by residues Leu9–Gly12, Lys23, Gln73, and Gly78–Thr79. Residue Asp103 coordinates Mg(2+). UDP-N-acetyl-alpha-D-glucosamine contacts are provided by Gly140, Glu155, Asn170, and Asn228. Position 228 (Asn228) interacts with Mg(2+). Positions Val231–Asn251 are linker. Residues Gly252–Lys456 form an N-acetyltransferase region. Positions 333 and 351 each coordinate UDP-N-acetyl-alpha-D-glucosamine. Residue His363 is the Proton acceptor of the active site. UDP-N-acetyl-alpha-D-glucosamine is bound by residues Tyr366 and Asn377. Residues Asn386 to Tyr387, Ala423, and Arg440 contribute to the acetyl-CoA site.

In the N-terminal section; belongs to the N-acetylglucosamine-1-phosphate uridyltransferase family. The protein in the C-terminal section; belongs to the transferase hexapeptide repeat family. In terms of assembly, homotrimer. Mg(2+) is required as a cofactor.

The protein localises to the cytoplasm. The catalysed reaction is alpha-D-glucosamine 1-phosphate + acetyl-CoA = N-acetyl-alpha-D-glucosamine 1-phosphate + CoA + H(+). The enzyme catalyses N-acetyl-alpha-D-glucosamine 1-phosphate + UTP + H(+) = UDP-N-acetyl-alpha-D-glucosamine + diphosphate. It functions in the pathway nucleotide-sugar biosynthesis; UDP-N-acetyl-alpha-D-glucosamine biosynthesis; N-acetyl-alpha-D-glucosamine 1-phosphate from alpha-D-glucosamine 6-phosphate (route II): step 2/2. It participates in nucleotide-sugar biosynthesis; UDP-N-acetyl-alpha-D-glucosamine biosynthesis; UDP-N-acetyl-alpha-D-glucosamine from N-acetyl-alpha-D-glucosamine 1-phosphate: step 1/1. The protein operates within bacterial outer membrane biogenesis; LPS lipid A biosynthesis. Functionally, catalyzes the last two sequential reactions in the de novo biosynthetic pathway for UDP-N-acetylglucosamine (UDP-GlcNAc). The C-terminal domain catalyzes the transfer of acetyl group from acetyl coenzyme A to glucosamine-1-phosphate (GlcN-1-P) to produce N-acetylglucosamine-1-phosphate (GlcNAc-1-P), which is converted into UDP-GlcNAc by the transfer of uridine 5-monophosphate (from uridine 5-triphosphate), a reaction catalyzed by the N-terminal domain. The chain is Bifunctional protein GlmU from Bacillus licheniformis (strain ATCC 14580 / DSM 13 / JCM 2505 / CCUG 7422 / NBRC 12200 / NCIMB 9375 / NCTC 10341 / NRRL NRS-1264 / Gibson 46).